Reading from the N-terminus, the 528-residue chain is Cytochrome P450 monooxygenase vrcB (528 aa).

Residues 5–27 (YGLFFAAVALYSVALVIYRLYLH) traverse the membrane as a helical segment. Position 470 (C470) interacts with heme.

The protein belongs to the cytochrome P450 family. Heme is required as a cofactor.

It localises to the membrane. It carries out the reaction variecoladiene + 4 reduced [NADPH--hemoprotein reductase] + 4 O2 = variecolin + 4 oxidized [NADPH--hemoprotein reductase] + 6 H2O + 4 H(+). It functions in the pathway secondary metabolite biosynthesis; terpenoid biosynthesis. Cytochrome P450 monooxygenase; part of the gene cluster that mediates the biosynthesis of the sesterterpene variecolin. The first step in the pathway is performed by the variecoladiene synthase vrcA that possesses both prenyl transferase and terpene cyclase activity, converting isopentenyl diphosphate and dimethylallyl diphosphate into geranylfarnesyl pyrophosphate (GFPP) and then converting GFPP into the tetracyclic variecoladiene. The cytochrome P450 monooxygenase vrcB then catalyzes multiple oxidations at C-5 and C-20 positions to yield variecolin. The polypeptide is Cytochrome P450 monooxygenase vrcB (Aspergillus aculeatus (strain ATCC 16872 / CBS 172.66 / WB 5094)).